Here is a 488-residue protein sequence, read N- to C-terminus: Bile acid receptor (488 aa).

A Glycyl lysine isopeptide (Lys-Gly) (interchain with G-Cter in SUMO1) cross-link involves residue Lys133. A DNA-binding region (nuclear receptor) is located at residues 135–210; the sequence is DELCVVCGDR…MGMLAECMYT (76 aa). Residues 138–158 form an NR C4-type zinc finger; the sequence is CVVCGDRASGYHYNALTCEGC. Phosphoserine; by PKC/PRKCA is present on residues Ser146 and Ser165. Lys168 is modified (N6-acetyllysine; by EP300). Residues 174-198 form an NR C4-type zinc finger; it reads CKNGGNCVMDMYMRRKCQECRLRKC. Lys221 bears the N6-methyllysine; by SETD7 mark. Lys228 bears the N6-acetyllysine; by EP300 mark. Positions 264 to 488 constitute an NR LBD domain; it reads DQQTLLDYIM…PLLCEIWDVQ (225 aa). Lys291 is covalently cross-linked (Glycyl lysine isopeptide (Lys-Gly) (interchain with G-Cter in SUMO1)). Chenodeoxycholate contacts are provided by Arg347, Tyr377, and Tyr385. Thr458 is subject to Phosphothreonine; by PKC/PRKCZ. His463 contacts chenodeoxycholate.

This sequence belongs to the nuclear hormone receptor family. NR1 subfamily. In terms of assembly, heterodimer with RXRA; the heterodimerization enhances the binding affinity for LXXLL motifs from coactivators. Binds DNA predominantly as a heterodimer with RXRA. After activation by agonist binding interacts with coactivators. Interacts with PPARGC1A, SMARCA4 and EP300. Interacts with NCOA1, NCOA2, CARM1, SETD7, PRMT1, GPS2, SMARCA4 and MED1. Interacts with XRCC5 and XRCC6; decreasing NR1H4/FXR transactivation activity towards ABCB11/BSEP. Interacts with PAGR1 and NCOA6; indicative for an association with an MLL2/MLL3 complex (ASCOM). Interacts with NR5A2. Post-translationally, acetylated by EP300. Lys-228 as is the major acetylation site for EP300; the dynamicly regulated acetylation inhibits heterodimerization with RXRA and transactivation activity. Deacetylated by SIRT1. Elevated acetylation levels are found in metabolic disease states (mouse models of obesity and type II diabetes). In terms of processing, methylation may increase transactivation of target genes. Phosphorylation by PKC/PRKCA increases transactivation activity by promoting association with PPARGC1A. Post-translationally, sumoylated upon ligand binding. As to expression, expressed in liver and kidney. Expressed in pancreatic beta cells and macrophages. Expressed in the villus epithelium in adult ileum, with highest expression in the intervillus regions. Expression in colon is reduced by inflammation.

It localises to the nucleus. In terms of biological role, ligand-activated transcription factor. Receptor for bile acids (BAs) such as chenodeoxycholic acid (CDCA), lithocholic acid, deoxycholic acid (DCA) and allocholic acid (ACA). Plays a essential role in BA homeostasis through the regulation of genes involved in BA synthesis, conjugation and enterohepatic circulation. Also regulates lipid and glucose homeostasis and is involved in innate immune response. The FXR-RXR heterodimer binds predominantly to farnesoid X receptor response elements (FXREs) containing two inverted repeats of the consensus sequence 5'-AGGTCA-3' in which the monomers are spaced by 1 nucleotide (IR-1) but also to tandem repeat DR1 sites with lower affinity, and can be activated by either FXR or RXR-specific ligands. It is proposed that monomeric nuclear receptors such as NR5A2/LRH-1 bound to coregulatory nuclear responsive element (NRE) halfsites located in close proximity to FXREs modulate transcriptional activity. In the liver activates transcription of the corepressor NR0B2 thereby indirectly inhibiting CYP7A1 and CYP8B1 (involved in BA synthesis) implicating at least in part histone demethylase KDM1A resulting in epigenomic repression, and SLC10A1/NTCP (involved in hepatic uptake of conjugated BAs). Activates transcription of the repressor MAFG (involved in regulation of BA synthesis). Activates transcription of SLC27A5/BACS and BAAT (involved in BA conjugation), ABCB11/BSEP (involved in bile salt export) by directly recruiting histone methyltransferase CARM1, and ABCC2/MRP2 (involved in secretion of conjugated BAs) and ABCB4 (involved in secretion of phosphatidylcholine in the small intestine). In ileal enterocytes activates FABP6/IBABP (involved in cytosolic transport), SLC51A/OSTA and SLC51B/OSTB (involved in secretion of conjugated BAs to the portal blood), and repressor NR0B2/SHP thereby indirectly inhibiting SLC10A2/ASBT (involved in BA uptake). In the intestine activates FGF15 expression and secretion leading to hepatic CYP7A1 repression; the function also involves the coordinated induction of hepatic KLB/beta-klotho expression. Transcriptional activation of FABP6/IBAP and SCD1 but not of ABCB11 is isoform-specific. Regulates transcription of liver UGT2B4 and SULT2A1 involved in BA detoxification; binding to the UGT2B4 promoter seems to imply a monomeric transactivation independent of RXRA. Modulates lipid homeostasis by activating liver NR0B2/SHP-mediated repression of SREBF1 isoform SREBP-1C (involved in de novo lipogenesis), expression of PLTP (involved in HDL formation), SCARB1 (involved in HDL hepatic uptake), APOE, APOC1, APOC4, VLDLR and SDC1 (involved in the hepatic uptake of LDL and IDL remnants), and inhibiting expression of MTTP (involved in VLDL assembly). Increases expression of APOC2 (promoting lipoprotein lipase activity implicated in triglyceride clearance). Transrepresses APOA1 probably involving a monomeric competition with NR2A1 for binding to a DR1 element. Also reduces triglyceride clearance by inhibiting expression of ANGPTL3 and APOC3 (both involved in inhibition of lipoprotein lipase). Involved in glucose homeostasis by modulating hepatic gluconeogenesis through activation of NR0B2/SHP-mediated repression of respective genes. Modulates glycogen synthesis (inducing phosphorylation of glycogen synthase kinase-3). Modulates glucose-stimulated insulin secretion and is involved in insulin resistance. Involved in intestinal innate immunity. Plays a role in protecting the distal small intestine against bacterial overgrowth and preservation of the epithelial barrier. Down-regulates inflammatory cytokine expression in several types of immune cells including macrophages and mononuclear cells. Mediates transrepression of TLR4-induced cytokine expression; the function seems to require its sumoylation and prevents N-CoR nuclear receptor corepressor clearance from target genes such as IL1B and NOS2. Involved in the TLR9-mediated protective mechanism in intestinal inflammation. Plays a anti-inflammatory role in liver inflammation; proposed to inhibit pro-inflammatory (but not antiapoptotic) NF-kappa-B signaling. Functionally, activates transcription of IBAP and SDC1. This is Bile acid receptor (Nr1h4) from Mus musculus (Mouse).